A 540-amino-acid polypeptide reads, in one-letter code: T-complex protein 1 subunit delta (540 aa).

Low complexity predominate over residues Met1–Ala12. Residues Met1–Val32 are disordered. A compositionally biased stretch (basic and acidic residues) spans Gly18–Ser31.

Belongs to the TCP-1 chaperonin family. As to quaternary structure, heterooligomeric complex of about 850 to 900 kDa that forms two stacked rings, 12 to 16 nm in diameter.

The protein localises to the cytoplasm. Functionally, molecular chaperone; assists the folding of proteins upon ATP hydrolysis. Known to play a role, in vitro, in the folding of actin and tubulin. This Caenorhabditis elegans protein is T-complex protein 1 subunit delta (cct-4).